A 159-amino-acid polypeptide reads, in one-letter code: Putative 4-hydroxy-4-methyl-2-oxoglutarate aldolase (159 aa).

Substrate contacts are provided by residues 74-77 and arginine 96; that span reads GDNL. An a divalent metal cation-binding site is contributed by aspartate 97.

The protein belongs to the class II aldolase/RraA-like family. Homotrimer. A divalent metal cation serves as cofactor.

The catalysed reaction is 4-hydroxy-4-methyl-2-oxoglutarate = 2 pyruvate. It carries out the reaction oxaloacetate + H(+) = pyruvate + CO2. Its function is as follows. Catalyzes the aldol cleavage of 4-hydroxy-4-methyl-2-oxoglutarate (HMG) into 2 molecules of pyruvate. Also contains a secondary oxaloacetate (OAA) decarboxylase activity due to the common pyruvate enolate transition state formed following C-C bond cleavage in the retro-aldol and decarboxylation reactions. This is Putative 4-hydroxy-4-methyl-2-oxoglutarate aldolase from Bacillus anthracis.